Consider the following 423-residue polypeptide: Galactosylceramide sulfotransferase (423 aa).

Topologically, residues 1-14 (MLPPQKKPWESMAK) are cytoplasmic. A helical; Signal-anchor for type II membrane protein membrane pass occupies residues 15–35 (GLVLGALFTSFLLLVYSYAVP). At 36-423 (PLHAGLASTT…WKFIRDFLRW (388 aa)) the chain is on the lumenal side. N-linked (GlcNAc...) asparagine glycosylation is found at Asn66 and Asn312.

This sequence belongs to the galactose-3-O-sulfotransferase family. In terms of tissue distribution, expressed in kidney proximal tubule, gastric mucosa and adenocarcinoma. Highly expressed in renal cell carcinoma cell lines.

Its subcellular location is the golgi apparatus membrane. It catalyses the reaction a beta-D-galactosyl-(1&lt;-&gt;1')-N-acylsphing-4-enine + 3'-phosphoadenylyl sulfate = an N-acyl-1-beta-D-(3-O-sulfo)-galactosyl-sphing-4-enine + adenosine 3',5'-bisphosphate + H(+). The catalysed reaction is a 1-O-alkyl-2-acyl-3-O-(beta-D-galactosyl)-sn-glycerol + 3'-phosphoadenylyl sulfate = a 1-O-alkyl-2-acyl-3-(beta-D-3-sulfogalactosyl)-sn-glycerol + adenosine 3',5'-bisphosphate + H(+). It carries out the reaction a beta-D-Gal-(1&lt;-&gt;1')-ceramide + 3'-phosphoadenylyl sulfate = 1-(3-O-sulfo-beta-D-galactosyl)-ceramide + adenosine 3',5'-bisphosphate + H(+). The enzyme catalyses a 1,2-diacyl-3-O-(beta-D-galactosyl)-sn-glycerol + 3'-phosphoadenylyl sulfate = 1,2-diacyl-3-(3-O-sulfo-beta-D-galactosyl)-sn-glycerol + adenosine 3',5'-bisphosphate + H(+). It catalyses the reaction a beta-D-Gal-(1-&gt;4)-beta-D-Glc-(1&lt;-&gt;1)-Cer(d18:1(4E)) + 3'-phosphoadenylyl sulfate = beta-D-3-sulfogalactosyl-(1-&gt;4)-beta-D-glucosyl-(1&lt;-&gt;1')-N-acylsphing-4-enine + adenosine 3',5'-bisphosphate + H(+). It functions in the pathway lipid metabolism; sphingolipid metabolism. In terms of biological role, catalyzes the transfer of a sulfate group to position 3 of non-reducing beta-galactosyl residues in glycerolipids and sphingolipids, therefore participates in the biosynthesis of sulfoglycolipids. Catalyzes the synthesis of galactosylceramide sulfate (sulfatide), a major lipid component of the myelin sheath and of monogalactosylalkylacylglycerol sulfate (seminolipid), present in spermatocytes. Seems to prefer beta-glycosides at the non-reducing termini of sugar chains attached to a lipid moiety. Also acts on lactosylceramide, galactosyl 1-alkyl-2-sn-glycerol and galactosyl diacylglycerol (in vitro). The chain is Galactosylceramide sulfotransferase from Homo sapiens (Human).